The following is a 165-amino-acid chain: Ribosomal RNA large subunit methyltransferase H (165 aa).

Position 109 (glycine 109) interacts with S-adenosyl-L-methionine.

The protein belongs to the RNA methyltransferase RlmH family. As to quaternary structure, homodimer.

It localises to the cytoplasm. It catalyses the reaction pseudouridine(1915) in 23S rRNA + S-adenosyl-L-methionine = N(3)-methylpseudouridine(1915) in 23S rRNA + S-adenosyl-L-homocysteine + H(+). In terms of biological role, specifically methylates the pseudouridine at position 1915 (m3Psi1915) in 23S rRNA. The chain is Ribosomal RNA large subunit methyltransferase H from Methylorubrum extorquens (strain CM4 / NCIMB 13688) (Methylobacterium extorquens).